Here is a 505-residue protein sequence, read N- to C-terminus: Maturase K (505 aa).

The protein belongs to the intron maturase 2 family. MatK subfamily.

It is found in the plastid. The protein resides in the chloroplast. In terms of biological role, usually encoded in the trnK tRNA gene intron. Probably assists in splicing its own and other chloroplast group II introns. This Kunzea ericoides (White teatree) protein is Maturase K.